A 736-amino-acid chain; its full sequence is Phosphoribosylformylglycinamidine synthase subunit PurL (736 aa).

The active site involves histidine 48. Tyrosine 51 and lysine 90 together coordinate ATP. Residue glutamate 92 participates in Mg(2+) binding. Substrate is bound by residues 93–96 and arginine 115; that span reads SHNH. Histidine 94 functions as the Proton acceptor in the catalytic mechanism. Aspartate 116 lines the Mg(2+) pocket. Glutamine 239 is a binding site for substrate. Aspartate 267 lines the Mg(2+) pocket. 311-313 serves as a coordination point for substrate; sequence ESQ. Aspartate 492 and glycine 529 together coordinate ATP. A Mg(2+)-binding site is contributed by asparagine 530. Serine 532 is a substrate binding site.

It belongs to the FGAMS family. As to quaternary structure, monomer. Part of the FGAM synthase complex composed of 1 PurL, 1 PurQ and 2 PurS subunits.

It is found in the cytoplasm. It catalyses the reaction N(2)-formyl-N(1)-(5-phospho-beta-D-ribosyl)glycinamide + L-glutamine + ATP + H2O = 2-formamido-N(1)-(5-O-phospho-beta-D-ribosyl)acetamidine + L-glutamate + ADP + phosphate + H(+). It participates in purine metabolism; IMP biosynthesis via de novo pathway; 5-amino-1-(5-phospho-D-ribosyl)imidazole from N(2)-formyl-N(1)-(5-phospho-D-ribosyl)glycinamide: step 1/2. Part of the phosphoribosylformylglycinamidine synthase complex involved in the purines biosynthetic pathway. Catalyzes the ATP-dependent conversion of formylglycinamide ribonucleotide (FGAR) and glutamine to yield formylglycinamidine ribonucleotide (FGAM) and glutamate. The FGAM synthase complex is composed of three subunits. PurQ produces an ammonia molecule by converting glutamine to glutamate. PurL transfers the ammonia molecule to FGAR to form FGAM in an ATP-dependent manner. PurS interacts with PurQ and PurL and is thought to assist in the transfer of the ammonia molecule from PurQ to PurL. This Bradyrhizobium diazoefficiens (strain JCM 10833 / BCRC 13528 / IAM 13628 / NBRC 14792 / USDA 110) protein is Phosphoribosylformylglycinamidine synthase subunit PurL.